The sequence spans 348 residues: Mediator of RNA polymerase II transcription subunit 18 (348 aa).

Over residues 152–218 (MDVDLEHKDK…KNDEVKHSEV (67 aa)) the composition is skewed to basic and acidic residues. Positions 152–227 (MDVDLEHKDK…VNLEDGAETG (76 aa)) are disordered. Positions 167 to 223 (DTKEKEEDKKEEDKKEEDKKEEDKKEEDKKEEDKKEEEKVEKKNDEVKHSEVNLEDG) form a coiled coil.

It belongs to the Mediator complex subunit 18 family. As to quaternary structure, component of the Mediator complex.

It localises to the nucleus. In terms of biological role, component of the Mediator complex, a coactivator involved in the regulated transcription of nearly all RNA polymerase II-dependent genes. Mediator functions as a bridge to convey information from gene-specific regulatory proteins to the basal RNA polymerase II transcription machinery. Mediator is recruited to promoters by direct interactions with regulatory proteins and serves as a scaffold for the assembly of a functional preinitiation complex with RNA polymerase II and the general transcription factors. This chain is Mediator of RNA polymerase II transcription subunit 18 (SRB5), found in Scheffersomyces stipitis (strain ATCC 58785 / CBS 6054 / NBRC 10063 / NRRL Y-11545) (Yeast).